The primary structure comprises 353 residues: Glucose import ATP-binding protein GlcV (353 aa).

The ABC transporter domain maps to 4-241 (IIVKNVSKVF…PVSIQVASLI (238 aa)). ATP-binding positions include 40-46 (SGAGKTT), glutamine 89, and glutamate 166.

The protein belongs to the ABC transporter superfamily. As to quaternary structure, the complex is composed of two ATP-binding proteins (GlcV), two transmembrane proteins (GlcT and GlcU) and a solute-binding protein (GlcS). Forms transient head-to-tail homodimers in the presence of ATP-Mg(2+).

It is found in the cell membrane. The enzyme catalyses D-glucose(out) + ATP + H2O = D-glucose(in) + ADP + phosphate + H(+). In terms of biological role, part of the ABC transporter complex GlcSTUV involved in glucose uptake. Responsible for energy coupling to the transport system. In vitro, as a free subunit, exhibits a constitutive ATPase activity. The polypeptide is Glucose import ATP-binding protein GlcV (Saccharolobus solfataricus (strain ATCC 35092 / DSM 1617 / JCM 11322 / P2) (Sulfolobus solfataricus)).